Here is a 242-residue protein sequence, read N- to C-terminus: MLVIPAIDLKDGKCVRLRQGRMDDATVFSDDPVEVAGRWVEAGARRLHIVDLDGAISGEPRNAGIISEIVARYPDLPVQVGGGIRDDDTVQVYLDAGVQWVIIGTKAVSAPHFVNDLCLEFPGHIIVGLDAKDGKVAIDGWSKLSNHDVIDMAMHFEQDGVAAIIYTDISRDGMMQGVNVESTVKLAQAVHVPVIASGGVTNLDDIRRLCAVSEEGIDGVIVGRALYEGTIDLAEAQKLADQ.

Residue Asp8 is the Proton acceptor of the active site. The Proton donor role is filled by Asp130.

This sequence belongs to the HisA/HisF family.

The protein resides in the cytoplasm. It carries out the reaction 1-(5-phospho-beta-D-ribosyl)-5-[(5-phospho-beta-D-ribosylamino)methylideneamino]imidazole-4-carboxamide = 5-[(5-phospho-1-deoxy-D-ribulos-1-ylimino)methylamino]-1-(5-phospho-beta-D-ribosyl)imidazole-4-carboxamide. The protein operates within amino-acid biosynthesis; L-histidine biosynthesis; L-histidine from 5-phospho-alpha-D-ribose 1-diphosphate: step 4/9. This chain is 1-(5-phosphoribosyl)-5-[(5-phosphoribosylamino)methylideneamino] imidazole-4-carboxamide isomerase, found in Thioalkalivibrio sulfidiphilus (strain HL-EbGR7).